The primary structure comprises 86 residues: Testis-expressed protein 54 (86 aa).

Positions 1–34 (MGCCQDKNRWASDEQARDEVTEDGREGNEVDNSG) are enriched in basic and acidic residues. Disordered stretches follow at residues 1–43 (MGCC…SNES) and 57–86 (SRRE…PEKG).

Expressed in Testis.

In Mus musculus (Mouse), this protein is Testis-expressed protein 54.